Consider the following 234-residue polypeptide: Leucyl/phenylalanyl-tRNA--protein transferase (234 aa).

The protein belongs to the L/F-transferase family.

It localises to the cytoplasm. The catalysed reaction is N-terminal L-lysyl-[protein] + L-leucyl-tRNA(Leu) = N-terminal L-leucyl-L-lysyl-[protein] + tRNA(Leu) + H(+). It carries out the reaction N-terminal L-arginyl-[protein] + L-leucyl-tRNA(Leu) = N-terminal L-leucyl-L-arginyl-[protein] + tRNA(Leu) + H(+). The enzyme catalyses L-phenylalanyl-tRNA(Phe) + an N-terminal L-alpha-aminoacyl-[protein] = an N-terminal L-phenylalanyl-L-alpha-aminoacyl-[protein] + tRNA(Phe). Functions in the N-end rule pathway of protein degradation where it conjugates Leu, Phe and, less efficiently, Met from aminoacyl-tRNAs to the N-termini of proteins containing an N-terminal arginine or lysine. The polypeptide is Leucyl/phenylalanyl-tRNA--protein transferase (Syntrophobacter fumaroxidans (strain DSM 10017 / MPOB)).